The chain runs to 183 residues: 1,6-anhydro-N-acetylmuramyl-L-alanine amidase AmpD (183 aa).

One can recognise an N-acetylmuramoyl-L-alanine amidase domain in the interval 30-167 (LLVVHNISLP…APDRKTDPGP (138 aa)). Residue H34 coordinates Zn(2+). The active-site Proton acceptor is the E116. Positions 154 and 164 each coordinate Zn(2+).

This sequence belongs to the N-acetylmuramoyl-L-alanine amidase 2 family. It depends on Zn(2+) as a cofactor.

It is found in the cytoplasm. It catalyses the reaction Hydrolyzes the link between N-acetylmuramoyl residues and L-amino acid residues in certain cell-wall glycopeptides.. Functionally, involved in cell wall peptidoglycan recycling. Specifically cleaves the amide bond between the lactyl group of N-acetylmuramic acid and the alpha-amino group of the L-alanine in degradation products containing an anhydro N-acetylmuramyl moiety. Is also involved in beta-lactamase induction. This Escherichia coli (strain K12) protein is 1,6-anhydro-N-acetylmuramyl-L-alanine amidase AmpD (ampD).